A 66-amino-acid chain; its full sequence is Protein I177L (66 aa).

An N-linked (GlcNAc...) asparagine; by host glycan is attached at asparagine 11.

The protein belongs to the asfivirus I177L family.

The protein resides in the virion. This African swine fever virus (strain Badajoz 1971 Vero-adapted) (Ba71V) protein is Protein I177L.